A 496-amino-acid chain; its full sequence is Adenosylhomocysteinase (496 aa).

Positions 68, 157, and 219 each coordinate substrate. 220 to 222 (TTT) contacts NAD(+). Residues K249 and D253 each contribute to the substrate site. Residues N254, 283–288 (GYGDVG), E306, N341, 362–364 (IGH), and N410 contribute to the NAD(+) site.

It belongs to the adenosylhomocysteinase family. NAD(+) is required as a cofactor.

Its subcellular location is the cytoplasm. It catalyses the reaction S-adenosyl-L-homocysteine + H2O = L-homocysteine + adenosine. Its pathway is amino-acid biosynthesis; L-homocysteine biosynthesis; L-homocysteine from S-adenosyl-L-homocysteine: step 1/1. In terms of biological role, may play a key role in the regulation of the intracellular concentration of adenosylhomocysteine. The chain is Adenosylhomocysteinase from Mycolicibacterium paratuberculosis (strain ATCC BAA-968 / K-10) (Mycobacterium paratuberculosis).